A 428-amino-acid chain; its full sequence is Enolase (428 aa).

Gln165 contributes to the (2R)-2-phosphoglycerate binding site. Glu207 serves as the catalytic Proton donor. The Mg(2+) site is built by Asp244, Glu283, and Asp310. (2R)-2-phosphoglycerate-binding residues include Lys335, Arg364, Ser365, and Lys386. Lys335 (proton acceptor) is an active-site residue.

It belongs to the enolase family. Mg(2+) is required as a cofactor.

The protein resides in the cytoplasm. Its subcellular location is the secreted. It is found in the cell surface. The catalysed reaction is (2R)-2-phosphoglycerate = phosphoenolpyruvate + H2O. It participates in carbohydrate degradation; glycolysis; pyruvate from D-glyceraldehyde 3-phosphate: step 4/5. In terms of biological role, catalyzes the reversible conversion of 2-phosphoglycerate (2-PG) into phosphoenolpyruvate (PEP). It is essential for the degradation of carbohydrates via glycolysis. The chain is Enolase from Chlamydia pneumoniae (Chlamydophila pneumoniae).